A 1147-amino-acid polypeptide reads, in one-letter code: uncharacterized protein (1147 aa).

Disordered stretches follow at residues 226–245, 255–297, 431–617, 647–670, 705–945, 1003–1032, and 1060–1090; these read FGQG…GQVD, IQGT…QEKA, SQHP…QSCI, EEMD…DPVR, HRHR…RRLQ, RQQQ…EAEK, and YQRR…RLAQ. A compositionally biased stretch (basic and acidic residues) spans 268–296; it reads WQKDETQTEDTSKDNHHCIHTSKENHQEK. The segment covering 431–441 has biased composition (basic residues); that stretch reads SQHPPKGKAQR. Low complexity predominate over residues 538–549; it reads PAGGALPAAGQA. Residues 584–603 are compositionally biased toward polar residues; the sequence is LNETSPLTQKPENQGAQQSL. A compositionally biased stretch (polar residues) spans 743–752; that stretch reads NQKTSNNISN. Residues 743–804 are a coiled coil; sequence NQKTSNNISN…ESKAEKKSQL (62 aa). Residues 768 to 802 show a composition bias toward basic and acidic residues; that stretch reads TDKSKAPKREKEGKLHEEAEAAVGKSKESKAEKKS. Basic residues predominate over residues 807-819; it reads KGKKTGAKGKRTR. The span at 870 to 884 shows a compositional bias: polar residues; the sequence is SQVSIDGRSSPTQTA. A compositionally biased stretch (basic and acidic residues) spans 895–945; that stretch reads DRSHEDPSKAFLVKREQEKASRDRLRAERAEMRRLEVERKRREQEEQRRLQ. Residues 907–1112 adopt a coiled-coil conformation; the sequence is VKREQEKASR…QKDALKKHLH (206 aa).

This is an uncharacterized protein from Bos taurus (Bovine).